Consider the following 1133-residue polypeptide: Roquin-1 (1133 aa).

Residues Cys14, Cys17, Cys33, His35, Cys38, Cys50, and Asp53 each contribute to the Zn(2+) site. The RING-type; degenerate zinc-finger motif lies at 14-54; the sequence is CPICTQTFDETIRKPISLGCGHTVCKMCLNKLHRKACPFDQ. Residues 89–173 are HEPN-N; that stretch reads GVEDTKHYEE…RTVTELILQH (85 aa). The tract at residues 174 to 326 is ROQ; the sequence is QNPQQLSSNL…MQSIIDKLQT (153 aa). The tract at residues 327 to 396 is HEPN-C; the sequence is PASFAQSVQE…VVHGLVDYIQ (70 aa). Residues 413-441 form a C3H1-type zinc finger; the sequence is KYKTYMCRDMKQRGGCPRGASCTFAHSQE. Phosphoserine is present on residues Ser462, Ser531, Ser535, and Ser863. The tract at residues 505–542 is disordered; the sequence is TQLIPRGTDPSYDSSLKPGKIDHLSSSAPGSPPDLLES. Disordered stretches follow at residues 1000–1019, 1058–1078, and 1094–1133; these read NTLA…WPGM, NTSK…PAED, and QENI…SSAP. The span at 1007 to 1016 shows a compositional bias: pro residues; that stretch reads QPPPPPPPKW. Residues 1058 to 1070 are compositionally biased toward polar residues; sequence NTSKQAENGQPEP. Residues 1096-1110 are compositionally biased toward low complexity; that stretch reads NISLLSNKTSSLNLS. Ser1110 bears the Phosphoserine mark. Over residues 1119 to 1133 the composition is skewed to polar residues; that stretch reads NNDSQRSGVTPSSAP.

Able to homodimerize. Interacts with DDX6 and EDC4. Interacts with CCR4-NOT deadenylase complex. Interacts with RC3H1; the interaction is RNA independent. In terms of processing, proteolytically cleaved after Arg-510 and Arg-579 by MALT1 in activated CD4(+) T cells; cleavage at Arg-510 and Arg-579 is critical for promoting RC3H1 degradation in response to T-cell receptor (TCR) stimulation, and hence is necessary for prolonging the stability of a set of mRNAs controlling Th17 cell differentiation. Widely expressed. Expressed at higher level in cerebellum, spleen, ovary and liver.

It is found in the cytoplasm. The protein localises to the P-body. Its subcellular location is the cytoplasmic granule. It carries out the reaction S-ubiquitinyl-[E2 ubiquitin-conjugating enzyme]-L-cysteine + [acceptor protein]-L-lysine = [E2 ubiquitin-conjugating enzyme]-L-cysteine + N(6)-ubiquitinyl-[acceptor protein]-L-lysine.. The protein operates within protein modification; protein ubiquitination. Functionally, post-transcriptional repressor of mRNAs containing a conserved stem loop motif, called constitutive decay element (CDE), which is often located in the 3'-UTR, as in HMGXB3, ICOS, IER3, NFKBID, NFKBIZ, PPP1R10, TNF, TNFRSF4 and in many more mRNAs. Cleaves translationally inactive mRNAs harboring a stem-loop (SL), often located in their 3'-UTRs, during the early phase of inflammation in a helicase UPF1-independent manner. Binds to CDE and promotes mRNA deadenylation and degradation. This process does not involve miRNAs. In follicular helper T (Tfh) cells, represses of ICOS and TNFRSF4 expression, thus preventing spontaneous Tfh cell differentiation, germinal center B-cell differentiation in the absence of immunization and autoimmunity. In resting or LPS-stimulated macrophages, controls inflammation by suppressing TNF expression. Also recognizes CDE in its own mRNA and in that of paralogous RC3H2, possibly leading to feedback loop regulation. Recognizes and binds mRNAs containing a hexaloop stem-loop motif, called alternative decay element (ADE). Together with ZC3H12A, destabilizes TNFRSF4/OX40 mRNA by binding to the conserved stem loop structure in its 3'UTR. Able to interact with double-stranded RNA (dsRNA). miRNA-binding protein that regulates microRNA homeostasis. Enhances DICER-mediated processing of pre-MIR146a but reduces mature MIR146a levels through an increase of 3' end uridylation. Both inhibits ICOS mRNA expression and they may act together to exert the suppression. Acts as a ubiquitin E3 ligase. Pairs with E2 enzymes UBE2A, UBE2B, UBE2D2, UBE2F, UBE2G1, UBE2G2 and UBE2L3 and produces polyubiquitin chains. Shows the strongest activity when paired with UBE2N:UBE2V1 or UBE2N:UBE2V2 E2 complexes and generate both short and long polyubiquitin chains. The chain is Roquin-1 from Homo sapiens (Human).